The chain runs to 573 residues: Dihydroxy-acid dehydratase (573 aa).

Cys-62 serves as a coordination point for [2Fe-2S] cluster. Residue Asp-94 participates in Mg(2+) binding. Cys-135 is a [2Fe-2S] cluster binding site. Mg(2+) contacts are provided by Asp-136 and Lys-137. Lys-137 carries the post-translational modification N6-carboxylysine. Residue Cys-212 coordinates [2Fe-2S] cluster. Glu-463 serves as a coordination point for Mg(2+). Ser-489 functions as the Proton acceptor in the catalytic mechanism.

The protein belongs to the IlvD/Edd family. Homodimer. [2Fe-2S] cluster serves as cofactor. The cofactor is Mg(2+).

The catalysed reaction is (2R)-2,3-dihydroxy-3-methylbutanoate = 3-methyl-2-oxobutanoate + H2O. It catalyses the reaction (2R,3R)-2,3-dihydroxy-3-methylpentanoate = (S)-3-methyl-2-oxopentanoate + H2O. It functions in the pathway amino-acid biosynthesis; L-isoleucine biosynthesis; L-isoleucine from 2-oxobutanoate: step 3/4. It participates in amino-acid biosynthesis; L-valine biosynthesis; L-valine from pyruvate: step 3/4. Functionally, functions in the biosynthesis of branched-chain amino acids. Catalyzes the dehydration of (2R,3R)-2,3-dihydroxy-3-methylpentanoate (2,3-dihydroxy-3-methylvalerate) into 2-oxo-3-methylpentanoate (2-oxo-3-methylvalerate) and of (2R)-2,3-dihydroxy-3-methylbutanoate (2,3-dihydroxyisovalerate) into 2-oxo-3-methylbutanoate (2-oxoisovalerate), the penultimate precursor to L-isoleucine and L-valine, respectively. This is Dihydroxy-acid dehydratase from Renibacterium salmoninarum (strain ATCC 33209 / DSM 20767 / JCM 11484 / NBRC 15589 / NCIMB 2235).